The primary structure comprises 168 residues: N-alpha-acetyltransferase 50 (168 aa).

One can recognise an N-acetyltransferase domain in the interval 5-154 (IELGDVTPHN…DAHVLQKSLR (150 aa)). Y30 provides a ligand contact to substrate. Residue Y72 is part of the active site. M74 lines the substrate pocket. 76–89 (LGCLAPYRRLGIGT) provides a ligand contact to acetyl-CoA. Residue H111 is part of the active site. 116-125 (NESAIDFYQK) is a CoA binding site. Positions 137–140 (YYKR) are substrate.

It belongs to the acetyltransferase family. GNAT subfamily. In terms of assembly, interacts with naa35.

It localises to the cytoplasm. The protein localises to the nucleus. It carries out the reaction N-terminal L-methionyl-L-alanyl-[protein] + acetyl-CoA = N-terminal N(alpha)-acetyl-L-methionyl-L-alanyl-[protein] + CoA + H(+). The catalysed reaction is N-terminal L-methionyl-L-seryl-[protein] + acetyl-CoA = N-terminal N(alpha)-acetyl-L-methionyl-L-seryl-[protein] + CoA + H(+). The enzyme catalyses N-terminal L-methionyl-L-valyl-[protein] + acetyl-CoA = N-terminal N(alpha)-acetyl-L-methionyl-L-valyl-[protein] + CoA + H(+). It catalyses the reaction N-terminal L-methionyl-L-threonyl-[protein] + acetyl-CoA = N-terminal N(alpha)-acetyl-L-methionyl-L-threonyl-[protein] + CoA + H(+). It carries out the reaction N-terminal L-methionyl-L-lysyl-[protein] + acetyl-CoA = N-terminal N(alpha)-acetyl-L-methionyl-L-lysyl-[protein] + CoA + H(+). The catalysed reaction is N-terminal L-methionyl-L-leucyl-[protein] + acetyl-CoA = N-terminal N(alpha)-acetyl-L-methionyl-L-leucyl-[protein] + CoA + H(+). The enzyme catalyses N-terminal L-methionyl-L-phenylalanyl-[protein] + acetyl-CoA = N-terminal N(alpha)-acetyl-L-methionyl-L-phenylalanyl-[protein] + CoA + H(+). It catalyses the reaction N-terminal L-methionyl-L-tyrosyl-[protein] + acetyl-CoA = N-terminal N(alpha)-acetyl-L-methionyl-L-tyrosyl-[protein] + CoA + H(+). Functionally, N-alpha-acetyltransferase that acetylates the N-terminus of proteins that retain their initiating methionine. Has a broad substrate specificity: able to acetylate the initiator methionine of most peptides, except for those with a proline in second position. Also displays N-epsilon-acetyltransferase activity by mediating acetylation of the side chain of specific lysines on proteins. The relevance of N-epsilon-acetyltransferase activity is however unclear. Required for sister chromatid cohesion during mitosis by promoting binding of CDCA5/sororin to cohesin. Essential in embryonic cell proliferation and survival. The chain is N-alpha-acetyltransferase 50 (naa50) from Danio rerio (Zebrafish).